A 370-amino-acid polypeptide reads, in one-letter code: Histidinol-phosphate aminotransferase 2 (370 aa).

Lysine 230 carries the N6-(pyridoxal phosphate)lysine modification.

This sequence belongs to the class-II pyridoxal-phosphate-dependent aminotransferase family. Histidinol-phosphate aminotransferase subfamily. Homodimer. The cofactor is pyridoxal 5'-phosphate.

It catalyses the reaction L-histidinol phosphate + 2-oxoglutarate = 3-(imidazol-4-yl)-2-oxopropyl phosphate + L-glutamate. It functions in the pathway amino-acid biosynthesis; L-histidine biosynthesis; L-histidine from 5-phospho-alpha-D-ribose 1-diphosphate: step 7/9. This Pseudomonas fluorescens (strain ATCC BAA-477 / NRRL B-23932 / Pf-5) protein is Histidinol-phosphate aminotransferase 2.